The sequence spans 706 residues: Elongation factor G (706 aa).

Residues 8–290 (KRYRNIGIVA…GVIEYMPSPT (283 aa)) form the tr-type G domain. GTP-binding positions include 17-24 (AHVDAGKT), 88-92 (DTPGH), and 142-145 (NKMD).

It belongs to the TRAFAC class translation factor GTPase superfamily. Classic translation factor GTPase family. EF-G/EF-2 subfamily.

It is found in the cytoplasm. Catalyzes the GTP-dependent ribosomal translocation step during translation elongation. During this step, the ribosome changes from the pre-translocational (PRE) to the post-translocational (POST) state as the newly formed A-site-bound peptidyl-tRNA and P-site-bound deacylated tRNA move to the P and E sites, respectively. Catalyzes the coordinated movement of the two tRNA molecules, the mRNA and conformational changes in the ribosome. The sequence is that of Elongation factor G from Chromohalobacter salexigens (strain ATCC BAA-138 / DSM 3043 / CIP 106854 / NCIMB 13768 / 1H11).